The following is a 465-amino-acid chain: Neutrophil collagenase (465 aa).

Residues 1 to 20 (MFRLKTLPLLIFLHTQLANA) form the signal peptide. The propeptide at 21 to 100 (FPVPEHLEEK…CGVPDSGDFL (80 aa)) is activation peptide. Asn55 is a glycosylation site (N-linked (GlcNAc...) asparagine). Positions 89-96 (PRCGVPDS) match the Cysteine switch motif. Cys91 contributes to the Zn(2+) binding site. Asn112 is a glycosylation site (N-linked (GlcNAc...) asparagine). A Ca(2+)-binding site is contributed by Asp157. Residues His167 and Asp169 each coordinate Zn(2+). Ca(2+)-binding residues include Asp174, Gly175, Asn177, and Ile179. Zn(2+) is bound at residue His182. Positions 189, 191, and 193 each coordinate Ca(2+). His195 contributes to the Zn(2+) binding site. Positions 197 and 200 each coordinate Ca(2+). His217 serves as a coordination point for Zn(2+). The active site involves Glu218. The Zn(2+) site is built by His221 and His227. Hemopexin repeat units lie at residues 276–325 (PKAC…WPFL), 326–372 (PNGL…GFPR), 374–420 (VQAI…FPGV), and 421–464 (NCRV…WLNC). Cys279 and Cys464 are oxidised to a cystine. Asp286 lines the Ca(2+) pocket. Residues Asp378 and Asp425 each contribute to the Ca(2+) site.

This sequence belongs to the peptidase M10A family. Requires Ca(2+) as cofactor. The cofactor is Zn(2+). As to expression, neutrophils. Expressed in uterus. Low levels in kidney and muscle.

It is found in the cytoplasmic granule. It localises to the secreted. Its subcellular location is the extracellular space. The protein localises to the extracellular matrix. The enzyme catalyses Cleavage of interstitial collagens in the triple helical domain. Unlike EC 3.4.24.7, this enzyme cleaves type III collagen more slowly than type I.. With respect to regulation, cannot be activated without removal of the activation peptide. Activated by matrilysin. Its function is as follows. Can degrade fibrillar type I, II, and III collagens. May play a role in the degradation of collagen fibers during uterine involution. The chain is Neutrophil collagenase (Mmp8) from Mus musculus (Mouse).